Here is a 370-residue protein sequence, read N- to C-terminus: 5-hydroxytryptamine receptor 5B (370 aa).

A disordered region spans residues 1–36; the sequence is MEVSNLSGATPGLAFPPGPESCSDSPSSGRSMGSTP. Topologically, residues 1 to 48 are extracellular; the sequence is MEVSNLSGATPGLAFPPGPESCSDSPSSGRSMGSTPGGLILPGREPPF. N5 carries N-linked (GlcNAc...) asparagine glycosylation. The segment covering 20–36 has biased composition (low complexity); the sequence is ESCSDSPSSGRSMGSTP. Residues 49–75 form a helical membrane-spanning segment; it reads SAFTVLVVTLLVLLIAATFLWNLLVLV. At 76-88 the chain is on the cytoplasmic side; it reads TILRVRAFHRVPH. Residues 89–115 form a helical membrane-spanning segment; the sequence is NLVASTAVSDVLVAVLVMPLSLVSELS. Over 116–127 the chain is Extracellular; the sequence is AGRRWQLGRSLC. An intrachain disulfide couples C127 to C205. Residues 128 to 150 traverse the membrane as a helical segment; sequence HVWISFDVLCCTASIWNVAAIAL. Position 134 (D134) interacts with serotonin. Topologically, residues 151–168 are cytoplasmic; that stretch reads DRYWTITRHLQYTLRTRS. A helical transmembrane segment spans residues 169–189; that stretch reads RASALMIAITWALSALIALAP. Residues 190–211 are Extracellular-facing; that stretch reads LLFGWGEAYDARLQRCQVSQEP. The chain crosses the membrane as a helical span at residues 212-233; sequence SYAVFSTCGAFYLPLAVVLFVY. The Cytoplasmic segment spans residues 234-300; the sequence is WKIYKAAKFR…QKEKRAAMMV (67 aa). Residues 301–325 form a helical membrane-spanning segment; sequence GILIGVFVLCWIPFFLTELISPLCA. The Extracellular segment spans residues 326-327; the sequence is CS. The chain crosses the membrane as a helical span at residues 328–352; it reads LPPIWKSIFLWLGYSNSFFNPLIYT. Residues 353-370 are Cytoplasmic-facing; sequence AFNKNYNNAFKSLFTKQR.

It belongs to the G-protein coupled receptor 1 family. In terms of tissue distribution, expressed predominantly in the central nervous system; in the hippocampus, habenula, and the doral raphe.

It localises to the cell membrane. In terms of biological role, G-protein coupled receptor for 5-hydroxytryptamine (serotonin), a biogenic hormone that functions as a neurotransmitter, a hormone and a mitogen. Also functions as a receptor for ergot alkaloid derivatives and other psychoactive substances. Ligand binding causes a conformation change that triggers signaling via guanine nucleotide-binding proteins (G proteins) and modulates the activity of downstream effectors. Htr5b is coupled to G(i)/G(o) G alpha proteins and mediates inhibitory neurotransmission: signaling inhibits adenylate cyclase activity and activates a phosphatidylinositol-calcium second messenger system that regulates the release of Ca(2+) ions from intracellular stores. The polypeptide is 5-hydroxytryptamine receptor 5B (Mus musculus (Mouse)).